A 420-amino-acid chain; its full sequence is Innexin-3 (420 aa).

4 consecutive transmembrane segments (helical) span residues 33-53 (ATLLAFFSIMVSCKQYVGSAI), 104-124 (WVPIVLAIQAFMFYLPSWIWS), 193-213 (MLYICIKLMYLANVFVQFIIL), and 278-298 (IYLFIWFWFVFVLITTFINTL). Positions 378 to 405 (NRDFHHGHSTKSTSPGLEEGHHEHLYTP) are disordered. A compositionally biased stretch (basic and acidic residues) spans 395–405 (EEGHHEHLYTP).

It belongs to the pannexin family. Interacts with F-actin. Evenly distributed along the adjoining membranes of the two pm5 pharyngeal muscle cells.

The protein resides in the cell membrane. Its subcellular location is the cell junction. The protein localises to the gap junction. Functionally, structural component of gap junctions. Plays a role in maintaining gap junction activity to promote phayngeal muscle contraction. In Caenorhabditis elegans, this protein is Innexin-3.